The chain runs to 508 residues: Photosystem II CP47 reaction center protein (508 aa).

6 helical membrane-spanning segments follow: residues 21–36 (SVHI…WAGS), 101–115 (IVFS…IWHW), 140–156 (GIHL…FGAF), 203–218 (IAAG…FHLS), 237–252 (VLSS…AFVV), and 457–472 (SFAL…HGSR).

Belongs to the PsbB/PsbC family. PsbB subfamily. As to quaternary structure, PSII is composed of 1 copy each of membrane proteins PsbA, PsbB, PsbC, PsbD, PsbE, PsbF, PsbH, PsbI, PsbJ, PsbK, PsbL, PsbM, PsbT, PsbX, PsbY, PsbZ, Psb30/Ycf12, at least 3 peripheral proteins of the oxygen-evolving complex and a large number of cofactors. It forms dimeric complexes. Binds multiple chlorophylls. PSII binds additional chlorophylls, carotenoids and specific lipids. is required as a cofactor.

The protein resides in the plastid. It localises to the chloroplast thylakoid membrane. Functionally, one of the components of the core complex of photosystem II (PSII). It binds chlorophyll and helps catalyze the primary light-induced photochemical processes of PSII. PSII is a light-driven water:plastoquinone oxidoreductase, using light energy to abstract electrons from H(2)O, generating O(2) and a proton gradient subsequently used for ATP formation. The protein is Photosystem II CP47 reaction center protein of Lepidium virginicum (Virginia pepperweed).